Consider the following 369-residue polypeptide: Arsenite methyltransferase (369 aa).

A Phosphoserine modification is found at Ser-46.

The protein belongs to the methyltransferase superfamily. Arsenite methyltransferase family.

Its subcellular location is the cytoplasm. It localises to the cytosol. It catalyses the reaction arsenic triglutathione + [thioredoxin]-dithiol + S-adenosyl-L-methionine + 2 H2O = methylarsonous acid + [thioredoxin]-disulfide + 3 glutathione + S-adenosyl-L-homocysteine + H(+). The enzyme catalyses arsenic triglutathione + 2 [thioredoxin]-dithiol + 2 S-adenosyl-L-methionine + H2O = dimethylarsinous acid + 2 [thioredoxin]-disulfide + 3 glutathione + 2 S-adenosyl-L-homocysteine + 2 H(+). It carries out the reaction arsenic triglutathione + 3 [thioredoxin]-dithiol + 3 S-adenosyl-L-methionine = trimethylarsine + 3 [thioredoxin]-disulfide + 3 glutathione + 3 S-adenosyl-L-homocysteine + 3 H(+). Catalyzes the transfer of a methyl group from AdoMet to trivalent arsenicals producing methylated and dimethylated arsenicals. It methylates arsenite to form methylarsonate, Me-AsO(3)H(2), which is reduced by methylarsonate reductase to methylarsonite, Me-As(OH)2. Methylarsonite is also a substrate and it is converted into the much less toxic compound dimethylarsinate (cacodylate), Me(2)As(O)-OH. The sequence is that of Arsenite methyltransferase (As3mt) from Rattus norvegicus (Rat).